Here is a 30-residue protein sequence, read N- to C-terminus: Snaclec carinactivase-1 regulatory subunit 17 kDa chain (30 aa).

The C-type lectin domain maps to 1–30; it reads DCLPGWSSHEGHCYKVFNQEMYWADAEKFC. Residues cysteine 2 and cysteine 13 are joined by a disulfide bond.

Belongs to the snaclec family. In terms of assembly, heterodimer of a metalloproteinase subunit and a regulatory subunit comprising two polypeptides disulfide-linked (14 kDa and 17 kDa chains). As to expression, expressed by the venom gland.

The protein localises to the secreted. Its function is as follows. Calcium-dependent prothrombin activator. This protein may activate prothrombin via recognition by the regulatory subunit of the calcium ion bound conformation of its gamma-carboxyglutamic acid (GLA) domain, and the subsequent conversion of prothrombin to active thrombin is catalyzed by the catalytic subunit. The sequence is that of Snaclec carinactivase-1 regulatory subunit 17 kDa chain from Echis carinatus (Saw-scaled viper).